Reading from the N-terminus, the 69-residue chain is MSDEPEHTAKVEPLRKPLPCPECGHPSHREHYPFCSDRCRTQDLSRWLKGSYAIPVAEDESNPDDDGRF.

Basic and acidic residues predominate over residues 1 to 15; sequence MSDEPEHTAKVEPLR. The interval 1–22 is disordered; it reads MSDEPEHTAKVEPLRKPLPCPE. 4 residues coordinate Zn(2+): C20, C23, C35, and C39.

It belongs to the DNA gyrase inhibitor YacG family. As to quaternary structure, interacts with GyrB. The cofactor is Zn(2+).

Inhibits all the catalytic activities of DNA gyrase by preventing its interaction with DNA. Acts by binding directly to the C-terminal domain of GyrB, which probably disrupts DNA binding by the gyrase. This chain is DNA gyrase inhibitor YacG, found in Allorhizobium ampelinum (strain ATCC BAA-846 / DSM 112012 / S4) (Agrobacterium vitis (strain S4)).